A 65-amino-acid chain; its full sequence is Large ribosomal subunit protein bL35 (65 aa).

Residues 1–22 (MPKMKTKSSAKKRFKVTGSGKI) are disordered.

This sequence belongs to the bacterial ribosomal protein bL35 family.

The sequence is that of Large ribosomal subunit protein bL35 from Flavobacterium johnsoniae (strain ATCC 17061 / DSM 2064 / JCM 8514 / BCRC 14874 / CCUG 350202 / NBRC 14942 / NCIMB 11054 / UW101) (Cytophaga johnsonae).